The sequence spans 434 residues: 4-hydroxy-3-methylbut-2-en-1-yl diphosphate synthase (flavodoxin) (434 aa).

Residues 1 to 15 show a composition bias toward polar residues; it reads MQSEAQSPRSSQICS. Positions 1–20 are disordered; the sequence is MQSEAQSPRSSQICSTEPVF. Residues cysteine 322, cysteine 325, cysteine 368, and glutamate 375 each coordinate [4Fe-4S] cluster.

This sequence belongs to the IspG family. [4Fe-4S] cluster serves as cofactor.

The enzyme catalyses (2E)-4-hydroxy-3-methylbut-2-enyl diphosphate + oxidized [flavodoxin] + H2O + 2 H(+) = 2-C-methyl-D-erythritol 2,4-cyclic diphosphate + reduced [flavodoxin]. Its pathway is isoprenoid biosynthesis; isopentenyl diphosphate biosynthesis via DXP pathway; isopentenyl diphosphate from 1-deoxy-D-xylulose 5-phosphate: step 5/6. Its function is as follows. Converts 2C-methyl-D-erythritol 2,4-cyclodiphosphate (ME-2,4cPP) into 1-hydroxy-2-methyl-2-(E)-butenyl 4-diphosphate. The polypeptide is 4-hydroxy-3-methylbut-2-en-1-yl diphosphate synthase (flavodoxin) (Burkholderia mallei (strain ATCC 23344)).